A 458-amino-acid polypeptide reads, in one-letter code: Probable ECA polymerase (458 aa).

11 helical membrane-spanning segments follow: residues 3–23 (LAQF…VLTL), 37–57 (VFFS…TCLL), 65–85 (VVPV…YAIY), 112–132 (THLT…IFFL), 154–174 (GVAL…VYFL), 180–200 (AWFF…VIVG), 201–221 (GTRA…IVRG), 222–242 (WISL…MFWL), 340–360 (LVVM…GMII), 377–397 (YKAA…IVLA), and 409–429 (VFFC…YWLF).

The protein belongs to the WzyE family. As to quaternary structure, probably part of a complex composed of WzxE, WzyE and WzzE.

The protein localises to the cell inner membrane. It functions in the pathway bacterial outer membrane biogenesis; enterobacterial common antigen biosynthesis. Functionally, probably involved in the polymerization of enterobacterial common antigen (ECA) trisaccharide repeat units. The chain is Probable ECA polymerase from Serratia proteamaculans (strain 568).